The following is a 306-amino-acid chain: Glutathione transport system permease protein GsiC (306 aa).

Residues 1 to 8 (MLNYVIKR) are Cytoplasmic-facing. Residues 9-29 (LLGLIPTLFIVSVLVFLFVHM) form a helical membrane-spanning segment. Residues 30 to 102 (LPGDPARLIA…SRFMPTLWLT (73 aa)) are Periplasmic-facing. An ABC transmembrane type-1 domain is found at 95-292 (FMPTLWLTIT…LEFILINLVV (198 aa)). Residues 103 to 123 (ITSMVWAVIFGMAAGIIAAVW) form a helical membrane-spanning segment. At 124–134 (RNRWPDRLSMT) the chain is on the cytoplasmic side. The helical transmembrane segment at 135–155 (IAVSGISFPAFALGMLLIQVF) threads the bilayer. Residues 156–168 (SVELGWLPTVGAD) are Periplasmic-facing. Residues 169–189 (SWQHYILPSLTLGAAVAAVMA) traverse the membrane as a helical segment. Over 190 to 228 (RFTRASFVDVLSEDYMRTARAKGVSETWVVLKHGLRNAM) the chain is Cytoplasmic. A helical membrane pass occupies residues 229–249 (IPVVTMMGLQFGFLLGGSIVV). The Periplasmic portion of the chain corresponds to 250 to 277 (EKVFNWPGLGRLLVDSVEMRDYPVIQAE). A helical transmembrane segment spans residues 278 to 298 (ILLFSLEFILINLVVDVLYAA). Residues 299–306 (INPAIRYK) lie on the Cytoplasmic side of the membrane.

Belongs to the binding-protein-dependent transport system permease family. In terms of assembly, the complex is composed of two ATP-binding proteins (GsiA), two transmembrane proteins (GsiC and GsiD) and a solute-binding protein (GsiB).

It is found in the cell inner membrane. Functionally, part of the ABC transporter complex GsiABCD involved in glutathione import. Probably responsible for the translocation of the substrate across the membrane. The polypeptide is Glutathione transport system permease protein GsiC (Escherichia coli O1:K1 / APEC).